Reading from the N-terminus, the 374-residue chain is Isopentenyl-diphosphate delta-isomerase (374 aa).

13–14 (RK) is a substrate binding site. Residues 71–73 (GMT), S104, and N132 contribute to the FMN site. 104–106 (SQR) contributes to the substrate binding site. A substrate-binding site is contributed by Q171. Mg(2+) is bound at residue E172. FMN contacts are provided by residues K203, T233, 282–284 (GMR), and 303–304 (AL).

The protein belongs to the IPP isomerase type 2 family. In terms of assembly, homooctamer. Dimer of tetramers. FMN serves as cofactor. NADPH is required as a cofactor. The cofactor is Mg(2+).

The protein localises to the cytoplasm. The catalysed reaction is isopentenyl diphosphate = dimethylallyl diphosphate. Involved in the biosynthesis of isoprenoids. Catalyzes the 1,3-allylic rearrangement of the homoallylic substrate isopentenyl (IPP) to its allylic isomer, dimethylallyl diphosphate (DMAPP). This is Isopentenyl-diphosphate delta-isomerase from Thermococcus onnurineus (strain NA1).